A 292-amino-acid chain; its full sequence is Carbapenem-hydrolyzing beta-lactamase transcriptional activator (292 aa).

One can recognise an HTH lysR-type domain in the interval 5 to 62 (IPLNALRAFEASARYLNFTKAGLELHVSQAAVSQHVRTLEAILGVNLFKRLPRGLQLT). The segment at residues 22–41 (FTKAGLELHVSQAAVSQHVR) is a DNA-binding region (H-T-H motif).

The protein belongs to the LysR transcriptional regulatory family.

Functionally, this protein is a positive regulator of gene expression of carbapenem-hydrolyzing beta-lactamase (smeA). Seems to also be a repressor of its own transcription. This Serratia marcescens protein is Carbapenem-hydrolyzing beta-lactamase transcriptional activator (smeR).